A 608-amino-acid polypeptide reads, in one-letter code: Amino-acid acetyltransferase, mitochondrial (608 aa).

Residues 402-604 (LNLITEHEKG…DICTRIEPSL (203 aa)) enclose the N-acetyltransferase domain.

This sequence belongs to the acetyltransferase family.

The protein localises to the mitochondrion. It carries out the reaction L-glutamate + acetyl-CoA = N-acetyl-L-glutamate + CoA + H(+). The protein operates within amino-acid biosynthesis; L-arginine biosynthesis; N(2)-acetyl-L-ornithine from L-glutamate: step 1/4. Functionally, N-acetylglutamate synthase involved in arginine biosynthesis. The protein is Amino-acid acetyltransferase, mitochondrial (ARG2) of Yarrowia lipolytica (strain CLIB 122 / E 150) (Yeast).